Consider the following 338-residue polypeptide: Ketol-acid reductoisomerase (NADP(+)) (338 aa).

Positions 1–181 (MKVFYDKDCD…GGGRTGIIET (181 aa)) constitute a KARI N-terminal Rossmann domain. Residues 24–27 (YGSQ), Arg-47, Ser-50, Thr-52, and 82–85 (DEFQ) each bind NADP(+). Residue His-107 is part of the active site. Gly-133 provides a ligand contact to NADP(+). One can recognise a KARI C-terminal knotted domain in the interval 182–327 (TFKDETETDL…EQLRSMMPWI (146 aa)). The Mg(2+) site is built by Asp-190, Glu-194, Glu-226, and Glu-230. Ser-251 contacts substrate.

The protein belongs to the ketol-acid reductoisomerase family. Mg(2+) serves as cofactor.

The catalysed reaction is (2R)-2,3-dihydroxy-3-methylbutanoate + NADP(+) = (2S)-2-acetolactate + NADPH + H(+). It catalyses the reaction (2R,3R)-2,3-dihydroxy-3-methylpentanoate + NADP(+) = (S)-2-ethyl-2-hydroxy-3-oxobutanoate + NADPH + H(+). Its pathway is amino-acid biosynthesis; L-isoleucine biosynthesis; L-isoleucine from 2-oxobutanoate: step 2/4. It functions in the pathway amino-acid biosynthesis; L-valine biosynthesis; L-valine from pyruvate: step 2/4. Functionally, involved in the biosynthesis of branched-chain amino acids (BCAA). Catalyzes an alkyl-migration followed by a ketol-acid reduction of (S)-2-acetolactate (S2AL) to yield (R)-2,3-dihydroxy-isovalerate. In the isomerase reaction, S2AL is rearranged via a Mg-dependent methyl migration to produce 3-hydroxy-3-methyl-2-ketobutyrate (HMKB). In the reductase reaction, this 2-ketoacid undergoes a metal-dependent reduction by NADPH to yield (R)-2,3-dihydroxy-isovalerate. This is Ketol-acid reductoisomerase (NADP(+)) from Pseudomonas putida (strain W619).